Here is an 899-residue protein sequence, read N- to C-terminus: Solute carrier family 12 member 9 (899 aa).

The Cytoplasmic segment spans residues 1 to 42; sequence MANEHSPLLVHGVYSMMGNAEDSRGGSAGTGEASNPKTDPRK. The helical transmembrane segment at 43-63 threads the bilayer; that stretch reads LNTFFGVMVPTILSMFSIVLF. At 64–78 the chain is on the extracellular side; sequence LRTGFVVGHAGLLHG. The helical transmembrane segment at 79–99 threads the bilayer; that stretch reads LLMLFVAYFIISLTILSICAI. Residues 100 to 125 are Cytoplasmic-facing; sequence STNGAVEGGGAYFMISRSLGPEFGGS. The chain crosses the membrane as a helical span at residues 126-146; sequence IGLMFYLAKVCACGVYVLGLV. At 147 to 175 the chain is on the extracellular side; it reads EAIMDVFGQDPGSSVAQGLRVLPQGYWYT. Residues 176-196 traverse the membrane as a helical segment; sequence VLYSSVVLLLCMLVCLVGAHI. At 197 to 201 the chain is on the cytoplasmic side; that stretch reads YAKAS. A helical transmembrane segment spans residues 202-222; it reads FLILLVVTVSLISIIISPLIV. Residues 223–269 are Extracellular-facing; sequence SPQGFNITHTYGNNHSVTVSPSYTGFNSTTLKNNLGPRYSLDYSTNT. N-linked (GlcNAc...) asparagine glycans are attached at residues asparagine 228, asparagine 236, and asparagine 249. Residues 270–290 form a helical membrane-spanning segment; the sequence is MMSFATVFAVMFTSCTGIMAG. Residues 291 to 306 are Cytoplasmic-facing; sequence ANMSGELKNPSESIPK. A helical membrane pass occupies residues 307-327; sequence GTIMAVAYTFTVYVLLYLLLS. Residues 328–350 lie on the Extracellular side of the membrane; sequence STCDRSLLLNDYAVFQRVNVWPP. The helical transmembrane segment at 351-371 threads the bilayer; it reads FVTIGVYCASLSAAMCSMIGA. Residues 372–373 lie on the Cytoplasmic side of the membrane; it reads SR. Residues 374 to 394 form a helical membrane-spanning segment; that stretch reads ILHALALDQLFGLPLAPAAVT. Residues 395 to 399 are Extracellular-facing; sequence SSSGN. Residues 400–420 form a helical membrane-spanning segment; sequence PWVSVLYTWALVQCTLFAGQL. Residue asparagine 421 is a topological domain, cytoplasmic. A helical transmembrane segment spans residues 422 to 442; it reads VIAGIVTVFYLLAYAAVDLAC. The Extracellular portion of the chain corresponds to 443–455; the sequence is LALEWASAPNFRP. A helical membrane pass occupies residues 456–476; sequence TFQFFSWHTCLLGIISCVVMM. Residues 477–487 lie on the Extracellular side of the membrane; that stretch reads FVINPVYSSAS. Residues 488 to 510 traverse the membrane as a helical segment; sequence IVLLLLLLLFLHYRSPTSSWGYI. At 511 to 563 the chain is on the cytoplasmic side; that stretch reads SQALIFHQVRKYLLMLDSRKDHVKFWRPQVLLMVSNPRSSCQLICFVNQLKKG. The helical transmembrane segment at 564 to 584 threads the bilayer; the sequence is GLFVLGHVQIGDLDVLPADPV. Residues 585 to 749 are Extracellular-facing; that stretch reads QPQYNFWLSL…NLLTPGSASY (165 aa). The helical transmembrane segment at 750-770 threads the bilayer; the sequence is ADVGSLFLLQMACVLNMASGW. At 771 to 899 the chain is on the cytoplasmic side; it reads RRARLRIFVC…GVTPVTCTEL (129 aa).

This sequence belongs to the SLC12A transporter family.

Its subcellular location is the cell membrane. It localises to the lysosome membrane. In terms of biological role, seems to correspond to a subunit of a multimeric transport system and thus, additional subunits may be required for its function. May play a role in lysosomal ion flux and osmoregulation. The chain is Solute carrier family 12 member 9 (slc12a9) from Danio rerio (Zebrafish).